The chain runs to 442 residues: tRNA-2-methylthio-N(6)-dimethylallyladenosine synthase (442 aa).

The MTTase N-terminal domain maps to 3 to 120 (KKLYIETHGC…LPEMIDAARV (118 aa)). Cysteine 12, cysteine 49, cysteine 83, cysteine 157, cysteine 161, and cysteine 164 together coordinate [4Fe-4S] cluster. Positions 143-375 (RVDGPSAYVS…QHRLNQQGFE (233 aa)) constitute a Radical SAM core domain. In terms of domain architecture, TRAM spans 378–442 (RQMVGSIQRI…PHSLRGSLLQ (65 aa)).

The protein belongs to the methylthiotransferase family. MiaB subfamily. In terms of assembly, monomer. [4Fe-4S] cluster serves as cofactor.

Its subcellular location is the cytoplasm. The catalysed reaction is N(6)-dimethylallyladenosine(37) in tRNA + (sulfur carrier)-SH + AH2 + 2 S-adenosyl-L-methionine = 2-methylsulfanyl-N(6)-dimethylallyladenosine(37) in tRNA + (sulfur carrier)-H + 5'-deoxyadenosine + L-methionine + A + S-adenosyl-L-homocysteine + 2 H(+). Its function is as follows. Catalyzes the methylthiolation of N6-(dimethylallyl)adenosine (i(6)A), leading to the formation of 2-methylthio-N6-(dimethylallyl)adenosine (ms(2)i(6)A) at position 37 in tRNAs that read codons beginning with uridine. The polypeptide is tRNA-2-methylthio-N(6)-dimethylallyladenosine synthase (Pseudomonas syringae pv. syringae (strain B728a)).